The chain runs to 289 residues: Ferri-bacillibactin esterase BesA (289 aa).

Active-site charge relay system residues include Ser163, Glu225, and His263.

Belongs to the esterase D family.

It is found in the cytoplasm. Functionally, catalyzes the hydrolysis of the trilactone cycle of ferri-bacillibactin (ferri-BB) complex, leading to the formation of bacillibactin monomers and to cytosolic iron release, thus making iron available for metabolic use. Can also hydrolyze bacillibactin (BB), however the catalytic efficiency for ferri-BB hydrolysis is much higher than for BB. In Bacillus subtilis (strain 168), this protein is Ferri-bacillibactin esterase BesA (besA).